The following is a 182-amino-acid chain: CASP-like protein 5A1 (182 aa).

The Cytoplasmic segment spans residues 1–47 (MEMASHPAVHPVALPPPYQAVGPPAPPAVRINDFPGSPGTLMGLALR). The helical transmembrane segment at 48–68 (FAQLGFALTALCIMVSIVGFS) threads the bilayer. Residues 69 to 72 (SVTA) lie on the Extracellular side of the membrane. Residues 73 to 93 (FCFLVAAMVLQCIWSLCLGVL) form a helical membrane-spanning segment. Over 94-117 (DCYALLTKRSLRNSLILSFFVVGD) the chain is Cytoplasmic. A helical membrane pass occupies residues 118–138 (WITSTMTFAGACAAAGITVLI). Topologically, residues 139 to 158 (DNDLNQCGPNHCNRFEAAAA) are extracellular. A helical transmembrane segment spans residues 159–179 (MAFMSWVITTISFFLSFWILV). The Cytoplasmic segment spans residues 180-182 (TCR).

It belongs to the Casparian strip membrane proteins (CASP) family. Homodimer and heterodimers.

It is found in the cell membrane. The protein is CASP-like protein 5A1 of Physcomitrium patens (Spreading-leaved earth moss).